We begin with the raw amino-acid sequence, 212 residues long: General odorant-binding protein 68 (212 aa).

The signal sequence occupies residues M1–A28. Disulfide bonds link C64-C85, C80-C152, and C130-C162.

Belongs to the PBP/GOBP family.

It localises to the secreted. In terms of biological role, present in the aqueous fluid surrounding olfactory sensory dendrites and are thought to aid in the capture and transport of hydrophobic odorants into and through this fluid. The sequence is that of General odorant-binding protein 68 (Obp68) from Anopheles gambiae (African malaria mosquito).